We begin with the raw amino-acid sequence, 430 residues long: Divergent protein kinase domain 2A (430 aa).

The signal sequence occupies residues 1–35; it reads MWRLVPLKLGRLSRALKLAALGSLLVLMLLHSPSL.

Belongs to the DIPK family. As to expression, expressed in heart, brain, liver, spleen, kidney, lung, thymus, testis, ovary and muscle.

It localises to the golgi apparatus. Its subcellular location is the cytoplasmic vesicle. The protein resides in the COPI-coated vesicle. It is found in the secreted. Functionally, may play a role in cardiomyocyte proliferation through paracrine signaling and activation of the PI3-kinase signaling cascade. This Mus musculus (Mouse) protein is Divergent protein kinase domain 2A (Dipk2a).